Consider the following 429-residue polypeptide: Gamma-glutamyl phosphate reductase (429 aa).

The protein belongs to the gamma-glutamyl phosphate reductase family.

The protein resides in the cytoplasm. It catalyses the reaction L-glutamate 5-semialdehyde + phosphate + NADP(+) = L-glutamyl 5-phosphate + NADPH + H(+). It functions in the pathway amino-acid biosynthesis; L-proline biosynthesis; L-glutamate 5-semialdehyde from L-glutamate: step 2/2. Its function is as follows. Catalyzes the NADPH-dependent reduction of L-glutamate 5-phosphate into L-glutamate 5-semialdehyde and phosphate. The product spontaneously undergoes cyclization to form 1-pyrroline-5-carboxylate. The polypeptide is Gamma-glutamyl phosphate reductase (Bradyrhizobium sp. (strain BTAi1 / ATCC BAA-1182)).